We begin with the raw amino-acid sequence, 380 residues long: Tryptophan 2,3-dioxygenase (380 aa).

Residues 57–61 and R128 each bind substrate; that span reads FIITH. Residue H313 participates in heme binding. T328 contributes to the substrate binding site.

This sequence belongs to the tryptophan 2,3-dioxygenase family. In terms of assembly, homotetramer. Dimer of dimers. It depends on heme as a cofactor.

The enzyme catalyses L-tryptophan + O2 = N-formyl-L-kynurenine. It functions in the pathway amino-acid degradation; L-tryptophan degradation via kynurenine pathway; L-kynurenine from L-tryptophan: step 1/2. The protein operates within pigment biosynthesis; ommochrome biosynthesis. Heme-dependent dioxygenase that catalyzes the oxidative cleavage of the L-tryptophan (L-Trp) pyrrole ring and converts L-tryptophan to N-formyl-L-kynurenine. Catalyzes the oxidative cleavage of the indole moiety. This is Tryptophan 2,3-dioxygenase from Drosophila willistoni (Fruit fly).